Consider the following 259-residue polypeptide: Haloacid dehalogenase-like hydrolase domain-containing protein 2 (259 aa).

Residues aspartate 13 and serine 15 each contribute to the Mg(2+) site. Substrate is bound by residues 13-15 (DLS) and 46-47 (TN). Positions 47 to 71 (NTTKESKQDLLERLRKLEFDISEDE) form a coiled coil. At lysine 50 the chain carries N6-succinyllysine. A substrate-binding site is contributed by lysine 179. Aspartate 204 is a Mg(2+) binding site.

This sequence belongs to the HAD-like hydrolase superfamily. Requires Mg(2+) as cofactor.

The protein is Haloacid dehalogenase-like hydrolase domain-containing protein 2 (HDHD2) of Homo sapiens (Human).